The chain runs to 137 residues: Ribosomal RNA large subunit methyltransferase H (137 aa).

S-adenosyl-L-methionine is bound by residues leucine 56, glycine 85, and 104–109 (LSPLTF).

The protein belongs to the RNA methyltransferase RlmH family. Homodimer.

It is found in the cytoplasm. It carries out the reaction pseudouridine(1915) in 23S rRNA + S-adenosyl-L-methionine = N(3)-methylpseudouridine(1915) in 23S rRNA + S-adenosyl-L-homocysteine + H(+). Its function is as follows. Specifically methylates the pseudouridine at position 1915 (m3Psi1915) in 23S rRNA. The sequence is that of Ribosomal RNA large subunit methyltransferase H from Prochlorococcus marinus (strain MIT 9515).